A 70-amino-acid chain; its full sequence is DNA gyrase inhibitor YacG (70 aa).

Zn(2+) contacts are provided by C9, C12, C28, and C32. A disordered region spans residues 43-70 (ESRKIPGSSIDPESIVTSNNKQDNVDEQ).

It belongs to the DNA gyrase inhibitor YacG family. Interacts with GyrB. Zn(2+) is required as a cofactor.

Inhibits all the catalytic activities of DNA gyrase by preventing its interaction with DNA. Acts by binding directly to the C-terminal domain of GyrB, which probably disrupts DNA binding by the gyrase. The sequence is that of DNA gyrase inhibitor YacG from Legionella pneumophila (strain Lens).